Here is a 490-residue protein sequence, read N- to C-terminus: V-type proton ATPase subunit B (490 aa).

Position 380 (arginine 380) interacts with ATP.

This sequence belongs to the ATPase alpha/beta chains family. As to quaternary structure, V-ATPase is a heteromultimeric enzyme made up of two complexes: the ATP-hydrolytic V1 complex and the proton translocation V0 complex. The V1 complex consists of three catalytic AB heterodimers that form a heterohexamer, three peripheral stalks each consisting of EG heterodimers, one central rotor including subunits D and F, and the regulatory subunits C and H. The proton translocation complex V0 consists of the proton transport subunit a, a ring of proteolipid subunits c9c'', rotary subunit d, subunits e and f, and the accessory subunits VhaAC45 and ATP6AP2. As to expression, expressed in Malpighian tubules, rectum, antennal palps and oviduct.

Functionally, non-catalytic subunit of the V1 complex of vacuolar(H+)-ATPase (V-ATPase), a multisubunit enzyme composed of a peripheral complex (V1) that hydrolyzes ATP and a membrane integral complex (V0) that translocates protons. V-ATPase is responsible for acidifying and maintaining the pH of intracellular compartments and in some cell types, is targeted to the plasma membrane, where it is responsible for acidifying the extracellular environment. Essential for the proper assembly and activity of V-ATPase. This Drosophila melanogaster (Fruit fly) protein is V-type proton ATPase subunit B (Vha55).